The following is a 149-amino-acid chain: UPF0260 protein PSEEN4031 (149 aa).

The protein belongs to the UPF0260 family.

The chain is UPF0260 protein PSEEN4031 from Pseudomonas entomophila (strain L48).